The chain runs to 545 residues: CTP synthase (545 aa).

The tract at residues 1 to 264 (MQYIVVTGGV…ITRLSKLLNM (264 aa)) is amidoligase domain. Position 12 (serine 12) interacts with CTP. Serine 12 contacts UTP. 13–18 (GLGKGT) contributes to the ATP binding site. L-glutamine is bound at residue tyrosine 53. Aspartate 70 is an ATP binding site. Mg(2+) is bound by residues aspartate 70 and glutamate 140. CTP is bound by residues 147 to 149 (DIE), 185 to 190 (KTKPTQ), and arginine 221. Residues 185 to 190 (KTKPTQ) and arginine 221 each bind UTP. The Glutamine amidotransferase type-1 domain maps to 294 to 527 (YVDLHDAYIS…VEQALIFKHR (234 aa)). L-glutamine is bound at residue glycine 347. The Nucleophile; for glutamine hydrolysis role is filled by cysteine 374. L-glutamine is bound by residues 375–378 (LGFQ), glutamate 398, and arginine 455. Residues histidine 500 and glutamate 502 contribute to the active site.

This sequence belongs to the CTP synthase family. As to quaternary structure, homotetramer.

It carries out the reaction UTP + L-glutamine + ATP + H2O = CTP + L-glutamate + ADP + phosphate + 2 H(+). The catalysed reaction is L-glutamine + H2O = L-glutamate + NH4(+). It catalyses the reaction UTP + NH4(+) + ATP = CTP + ADP + phosphate + 2 H(+). It participates in pyrimidine metabolism; CTP biosynthesis via de novo pathway; CTP from UDP: step 2/2. Its activity is regulated as follows. Allosterically activated by GTP, when glutamine is the substrate; GTP has no effect on the reaction when ammonia is the substrate. The allosteric effector GTP functions by stabilizing the protein conformation that binds the tetrahedral intermediate(s) formed during glutamine hydrolysis. Inhibited by the product CTP, via allosteric rather than competitive inhibition. Functionally, catalyzes the ATP-dependent amination of UTP to CTP with either L-glutamine or ammonia as the source of nitrogen. Regulates intracellular CTP levels through interactions with the four ribonucleotide triphosphates. This Thermoplasma acidophilum (strain ATCC 25905 / DSM 1728 / JCM 9062 / NBRC 15155 / AMRC-C165) protein is CTP synthase.